Consider the following 111-residue polypeptide: Cell cycle protein GpsB (111 aa).

Residues 32 to 63 (LDDIMKDYDAYEAIIKELKGEIARLKAQAANS) are a coiled coil. The interval 59 to 80 (QAANSPKTTLPTEESNDVLRTE) is disordered. Positions 60-71 (AANSPKTTLPTE) are enriched in polar residues.

The protein belongs to the GpsB family. Forms polymers through the coiled coil domains. Interacts with PBP1, MreC and EzrA.

It is found in the cytoplasm. Its function is as follows. Divisome component that associates with the complex late in its assembly, after the Z-ring is formed, and is dependent on DivIC and PBP2B for its recruitment to the divisome. Together with EzrA, is a key component of the system that regulates PBP1 localization during cell cycle progression. Its main role could be the removal of PBP1 from the cell pole after pole maturation is completed. Also contributes to the recruitment of PBP1 to the division complex. Not essential for septum formation. In Streptococcus suis (strain 98HAH33), this protein is Cell cycle protein GpsB.